The chain runs to 265 residues: Imidazole glycerol phosphate synthase subunit HisF (265 aa).

Residues D17 and D136 contribute to the active site.

It belongs to the HisA/HisF family. As to quaternary structure, heterodimer of HisH and HisF.

The protein localises to the cytoplasm. The enzyme catalyses 5-[(5-phospho-1-deoxy-D-ribulos-1-ylimino)methylamino]-1-(5-phospho-beta-D-ribosyl)imidazole-4-carboxamide + L-glutamine = D-erythro-1-(imidazol-4-yl)glycerol 3-phosphate + 5-amino-1-(5-phospho-beta-D-ribosyl)imidazole-4-carboxamide + L-glutamate + H(+). The protein operates within amino-acid biosynthesis; L-histidine biosynthesis; L-histidine from 5-phospho-alpha-D-ribose 1-diphosphate: step 5/9. Its function is as follows. IGPS catalyzes the conversion of PRFAR and glutamine to IGP, AICAR and glutamate. The HisF subunit catalyzes the cyclization activity that produces IGP and AICAR from PRFAR using the ammonia provided by the HisH subunit. The chain is Imidazole glycerol phosphate synthase subunit HisF from Mycobacterium avium (strain 104).